A 141-amino-acid polypeptide reads, in one-letter code: MAKKVIKMVKLQIPAGKANPAPPVGPALGQAGVNIMGFCKEFNARTADQAGLIIPVEITVFEDRSFTFITKTPPAAVLLKKAAGIESGSGEPNRNKVATVKRDKVREIAETKMPDLNAASVEAAMRMVEGAARSMGIVIED.

It belongs to the universal ribosomal protein uL11 family. As to quaternary structure, part of the ribosomal stalk of the 50S ribosomal subunit. Interacts with L10 and the large rRNA to form the base of the stalk. L10 forms an elongated spine to which L12 dimers bind in a sequential fashion forming a multimeric L10(L12)X complex. One or more lysine residues are methylated.

Its function is as follows. Forms part of the ribosomal stalk which helps the ribosome interact with GTP-bound translation factors. This is Large ribosomal subunit protein uL11A from Bacillus cereus (strain ATCC 14579 / DSM 31 / CCUG 7414 / JCM 2152 / NBRC 15305 / NCIMB 9373 / NCTC 2599 / NRRL B-3711).